The sequence spans 331 residues: ADP-L-glycero-D-manno-heptose-6-epimerase (331 aa).

NADP(+) is bound by residues 11–12 (FI), 32–33 (DN), Lys39, Lys54, 75–79 (EGACS), and Asn92. Tyr139 functions as the Proton acceptor in the catalytic mechanism. Lys143 provides a ligand contact to NADP(+). Substrate is bound at residue Asn168. Positions 169 and 177 each coordinate NADP(+). Lys177 functions as the Proton acceptor in the catalytic mechanism. Residues Arg179, His186, 200–203 (FGEY), Arg213, and Tyr292 contribute to the substrate site.

Belongs to the NAD(P)-dependent epimerase/dehydratase family. HldD subfamily. As to quaternary structure, homopentamer. NADP(+) serves as cofactor.

The catalysed reaction is ADP-D-glycero-beta-D-manno-heptose = ADP-L-glycero-beta-D-manno-heptose. It participates in nucleotide-sugar biosynthesis; ADP-L-glycero-beta-D-manno-heptose biosynthesis; ADP-L-glycero-beta-D-manno-heptose from D-glycero-beta-D-manno-heptose 7-phosphate: step 4/4. Catalyzes the interconversion between ADP-D-glycero-beta-D-manno-heptose and ADP-L-glycero-beta-D-manno-heptose via an epimerization at carbon 6 of the heptose. This Ralstonia nicotianae (strain ATCC BAA-1114 / GMI1000) (Ralstonia solanacearum) protein is ADP-L-glycero-D-manno-heptose-6-epimerase.